A 605-amino-acid chain; its full sequence is MASAKKSVDIKNIRNFSIIAHIDHGKSTLADRFIQMCGGLQDREMQAQVLDSMELERERGITIKAASVTLYYTHPNGQEYQLNFIDTPGHVDFSYEVSRSLAACEGALLVVDAAQGVEAQSVANCYTAIEQGLEVLPILNKIDLPQAEPERVIHEIEEIIGIEATDAPTCSAKTGLGVEGVLERLVDVIPAPEGDRDAPLQALIIDSWFDNYLGVVSLVRIKQGRIRKGDKMLVKSTGQVHPVTSVGVFNPKHSETDILEAGEVGFVIAGIKDIFGAPVGDTITLSSTPEVKTLPGFKKVKPQVYAGLFPIDSSDFEPFREALQKLQINDSALFFEPESSDALGFGFRCGFLGMLHMEIVQERLEREYDLDLISSAPTVVYEALTKKGDTIYIDSPSKMPDASTVEDLREPIAECHILVPQEYLGNVMTLCIERRGVQKDMKFLGNQVSVTFEIPMAEVVMDFFDKLKSCSRGFASLDYNFVRFESSSLVKVDVLINGEKVDALAMICHRQDARHRGIALVEKMKDLIPRQMFDVAIQAAIGAQVIARSTVKAMRKNVLAKCYGGDVSRKKKLLAKQKEGKKRMKQVGSVEIPQEAFLAVLKVER.

Residues 11–193 form the tr-type G domain; sequence KNIRNFSIIA…RLVDVIPAPE (183 aa). Residues 23–28 and 140–143 each bind GTP; these read DHGKST and NKID.

Belongs to the TRAFAC class translation factor GTPase superfamily. Classic translation factor GTPase family. LepA subfamily.

Its subcellular location is the cell inner membrane. It catalyses the reaction GTP + H2O = GDP + phosphate + H(+). Functionally, required for accurate and efficient protein synthesis under certain stress conditions. May act as a fidelity factor of the translation reaction, by catalyzing a one-codon backward translocation of tRNAs on improperly translocated ribosomes. Back-translocation proceeds from a post-translocation (POST) complex to a pre-translocation (PRE) complex, thus giving elongation factor G a second chance to translocate the tRNAs correctly. Binds to ribosomes in a GTP-dependent manner. This chain is Elongation factor 4, found in Acinetobacter baylyi (strain ATCC 33305 / BD413 / ADP1).